The following is a 341-amino-acid chain: Phosphate acyltransferase (341 aa).

It belongs to the PlsX family. Homodimer. Probably interacts with PlsY.

The protein localises to the cytoplasm. It carries out the reaction a fatty acyl-[ACP] + phosphate = an acyl phosphate + holo-[ACP]. The protein operates within lipid metabolism; phospholipid metabolism. Catalyzes the reversible formation of acyl-phosphate (acyl-PO(4)) from acyl-[acyl-carrier-protein] (acyl-ACP). This enzyme utilizes acyl-ACP as fatty acyl donor, but not acyl-CoA. In Idiomarina loihiensis (strain ATCC BAA-735 / DSM 15497 / L2-TR), this protein is Phosphate acyltransferase.